Consider the following 68-residue polypeptide: Putative membrane protein insertion efficiency factor (68 aa).

The protein belongs to the UPF0161 family.

The protein localises to the cell inner membrane. Functionally, could be involved in insertion of integral membrane proteins into the membrane. The polypeptide is Putative membrane protein insertion efficiency factor (Hydrogenobaculum sp. (strain Y04AAS1)).